The following is a 276-amino-acid chain: Putative ripening-related protein 5 (276 aa).

Positions 1–18 (MAMIFLLAALSTTHLASS) are cleaved as a signal peptide.

Belongs to the kiwellin family.

It is found in the secreted. This chain is Putative ripening-related protein 5, found in Oryza sativa subsp. japonica (Rice).